The chain runs to 969 residues: Leucine--tRNA ligase (969 aa).

The 'HIGH' region motif lies at 45–55 (PYTNAPLHIGH). Residues 649-653 (KMSKS) carry the 'KMSKS' region motif. Lys652 contributes to the ATP binding site.

The protein belongs to the class-I aminoacyl-tRNA synthetase family.

Its subcellular location is the cytoplasm. It carries out the reaction tRNA(Leu) + L-leucine + ATP = L-leucyl-tRNA(Leu) + AMP + diphosphate. The sequence is that of Leucine--tRNA ligase from Staphylothermus marinus (strain ATCC 43588 / DSM 3639 / JCM 9404 / F1).